The chain runs to 531 residues: Membrane protein insertase YidC (531 aa).

4 helical membrane-spanning segments follow: residues 5–25, 343–363, 415–435, and 489–509; these read ALIA…LFSP, GNYG…FYPL, LPML…MFSI, and PVVF…YWLV.

It belongs to the OXA1/ALB3/YidC family. Type 1 subfamily. Interacts with the Sec translocase complex via SecD. Specifically interacts with transmembrane segments of nascent integral membrane proteins during membrane integration.

Its subcellular location is the cell inner membrane. In terms of biological role, required for the insertion and/or proper folding and/or complex formation of integral membrane proteins into the membrane. Involved in integration of membrane proteins that insert both dependently and independently of the Sec translocase complex, as well as at least some lipoproteins. Aids folding of multispanning membrane proteins. The polypeptide is Membrane protein insertase YidC (Geobacter sulfurreducens (strain ATCC 51573 / DSM 12127 / PCA)).